We begin with the raw amino-acid sequence, 195 residues long: NADH-quinone oxidoreductase subunit B (195 aa).

Positions 74, 75, 139, and 169 each coordinate [4Fe-4S] cluster.

It belongs to the complex I 20 kDa subunit family. NDH-1 is composed of 14 different subunits. Subunits NuoB, C, D, E, F, and G constitute the peripheral sector of the complex. It depends on [4Fe-4S] cluster as a cofactor.

It localises to the cell inner membrane. It carries out the reaction a quinone + NADH + 5 H(+)(in) = a quinol + NAD(+) + 4 H(+)(out). In terms of biological role, NDH-1 shuttles electrons from NADH, via FMN and iron-sulfur (Fe-S) centers, to quinones in the respiratory chain. The immediate electron acceptor for the enzyme in this species is believed to be ubiquinone. Couples the redox reaction to proton translocation (for every two electrons transferred, four hydrogen ions are translocated across the cytoplasmic membrane), and thus conserves the redox energy in a proton gradient. The polypeptide is NADH-quinone oxidoreductase subunit B (Methylobacterium sp. (strain 4-46)).